Consider the following 1533-residue polypeptide: Glycogen debranching enzyme (1533 aa).

Ser-64 carries the phosphoserine modification. Catalysis depends on residues Asp-527, His-530, and Asp-628.

Belongs to the glycogen debranching enzyme family. As to quaternary structure, monomer. Interacts with NHLRC1/malin. Ubiquitinated. Ubiquitous. Expressed in striated skeletal muscle, heart, liver, spleen, skin, spinal cord, lung, kidney and testicle.

The protein resides in the cytoplasm. The enzyme catalyses Transfers a segment of a (1-&gt;4)-alpha-D-glucan to a new position in an acceptor, which may be glucose or a (1-&gt;4)-alpha-D-glucan.. The catalysed reaction is Hydrolysis of (1-&gt;6)-alpha-D-glucosidic branch linkages in glycogen phosphorylase limit dextrin.. Multifunctional enzyme acting as 1,4-alpha-D-glucan:1,4-alpha-D-glucan 4-alpha-D-glycosyltransferase and amylo-1,6-glucosidase in glycogen degradation. The sequence is that of Glycogen debranching enzyme from Equus caballus (Horse).